The following is a 257-amino-acid chain: Ribonuclease PH (257 aa).

Phosphate-binding positions include Arg-86 and 124-126; that span reads GTR.

Belongs to the RNase PH family. Homohexameric ring arranged as a trimer of dimers.

The catalysed reaction is tRNA(n+1) + phosphate = tRNA(n) + a ribonucleoside 5'-diphosphate. Its function is as follows. Phosphorolytic 3'-5' exoribonuclease that plays an important role in tRNA 3'-end maturation. Removes nucleotide residues following the 3'-CCA terminus of tRNAs; can also add nucleotides to the ends of RNA molecules by using nucleoside diphosphates as substrates, but this may not be physiologically important. Probably plays a role in initiation of 16S rRNA degradation (leading to ribosome degradation) during starvation. This is Ribonuclease PH from Sulfurihydrogenibium sp. (strain YO3AOP1).